The chain runs to 204 residues: UPF0215 protein MTH_1316 (204 aa).

This sequence belongs to the UPF0215 family.

The sequence is that of UPF0215 protein MTH_1316 from Methanothermobacter thermautotrophicus (strain ATCC 29096 / DSM 1053 / JCM 10044 / NBRC 100330 / Delta H) (Methanobacterium thermoautotrophicum).